The sequence spans 368 residues: F-box protein At3g17710 (368 aa).

Residues 1 to 46 (MASVKLPWDLEEEILSRLPPRSLVRFRTVCKHWNGLFSDKRFVKKH) enclose the F-box domain.

The chain is F-box protein At3g17710 from Arabidopsis thaliana (Mouse-ear cress).